The following is a 113-amino-acid chain: Na(+)/H(+) antiporter subunit C1 (113 aa).

3 helical membrane passes run 1–21 (MEII…YLVL), 28–48 (IVMG…TMGG), and 72–92 (LILT…VLAF).

Belongs to the CPA3 antiporters (TC 2.A.63) subunit C family. As to quaternary structure, may form a heterooligomeric complex that consists of seven subunits: mnhA1, mnhB1, mnhC1, mnhD1, mnhE1, mnhF1 and mnhG1.

It localises to the cell membrane. Functionally, mnh complex is a Na(+)/H(+) antiporter involved in Na(+) excretion. The sequence is that of Na(+)/H(+) antiporter subunit C1 (mnhC1) from Staphylococcus aureus (strain JH1).